The sequence spans 538 residues: Putative outer membrane porin BglH (538 aa).

A signal peptide spans 1 to 25 (MFRRNLITSAILLMAPLAFSAQSLA). A disordered region spans residues 52 to 82 (KDEEKKKYTPATVNRSVSTNDQGYAANPFPT). Polar residues predominate over residues 62-73 (ATVNRSVSTNDQ).

The protein belongs to the porin LamB (TC 1.B.3) family.

Its subcellular location is the cell outer membrane. In terms of biological role, may be a sugar porin with a broad carbohydrate specificity. This Escherichia coli O139:H28 (strain E24377A / ETEC) protein is Putative outer membrane porin BglH (bglH).